The sequence spans 361 residues: Phosphoserine aminotransferase (361 aa).

An L-glutamate-binding site is contributed by arginine 43. Pyridoxal 5'-phosphate is bound by residues 77–78 (AS), tryptophan 103, threonine 153, aspartate 173, and glutamine 196. N6-(pyridoxal phosphate)lysine is present on lysine 197. 238-239 (NT) serves as a coordination point for pyridoxal 5'-phosphate.

Belongs to the class-V pyridoxal-phosphate-dependent aminotransferase family. SerC subfamily. Homodimer. The cofactor is pyridoxal 5'-phosphate.

It is found in the cytoplasm. The enzyme catalyses O-phospho-L-serine + 2-oxoglutarate = 3-phosphooxypyruvate + L-glutamate. It carries out the reaction 4-(phosphooxy)-L-threonine + 2-oxoglutarate = (R)-3-hydroxy-2-oxo-4-phosphooxybutanoate + L-glutamate. Its pathway is amino-acid biosynthesis; L-serine biosynthesis; L-serine from 3-phospho-D-glycerate: step 2/3. The protein operates within cofactor biosynthesis; pyridoxine 5'-phosphate biosynthesis; pyridoxine 5'-phosphate from D-erythrose 4-phosphate: step 3/5. Its function is as follows. Catalyzes the reversible conversion of 3-phosphohydroxypyruvate to phosphoserine and of 3-hydroxy-2-oxo-4-phosphonooxybutanoate to phosphohydroxythreonine. The protein is Phosphoserine aminotransferase of Pseudomonas entomophila (strain L48).